The chain runs to 60 residues: Large ribosomal subunit protein bL32 (60 aa).

Residues 1–23 are compositionally biased toward basic residues; the sequence is MAKHPVPKKKTSKSKRDMRRSHH. Residues 1–34 are disordered; sequence MAKHPVPKKKTSKSKRDMRRSHHALTAPNLTECP. Zn(2+) is bound by residues cysteine 33, cysteine 36, cysteine 46, and cysteine 49. The C4-type zinc-finger motif lies at 33–49; sequence CPQCHGKKLSHHICPNC.

Belongs to the bacterial ribosomal protein bL32 family. In terms of assembly, part of the 50S ribosomal subunit. Contacts proteins L17 and L22. Zn(2+) is required as a cofactor.

Its function is as follows. Forms a cluster with L17 and L22, and with L22, a pair of 'tweezers' that hold together all the domains of the 23S rRNA. Interacts with the antibiotic troleandomycin which blocks the peptide exit tunnel. This is Large ribosomal subunit protein bL32 (rpmF) from Deinococcus radiodurans (strain ATCC 13939 / DSM 20539 / JCM 16871 / CCUG 27074 / LMG 4051 / NBRC 15346 / NCIMB 9279 / VKM B-1422 / R1).